The following is a 319-amino-acid chain: Na(+)-translocating NADH-quinone reductase subunit C (319 aa).

Residues 14–34 form a helical membrane-spanning segment; sequence WYVILFIFALSLFSSVFLSTV. The residue at position 283 (Thr-283) is an FMN phosphoryl threonine.

Belongs to the NqrC family. In terms of assembly, composed of six subunits; NqrA, NqrB, NqrC, NqrD, NqrE and NqrF. It depends on FMN as a cofactor.

The protein resides in the cell inner membrane. It carries out the reaction a ubiquinone + n Na(+)(in) + NADH + H(+) = a ubiquinol + n Na(+)(out) + NAD(+). Functionally, NQR complex catalyzes the reduction of ubiquinone-1 to ubiquinol by two successive reactions, coupled with the transport of Na(+) ions from the cytoplasm to the periplasm. NqrA to NqrE are probably involved in the second step, the conversion of ubisemiquinone to ubiquinol. The chain is Na(+)-translocating NADH-quinone reductase subunit C from Chlamydia caviae (strain ATCC VR-813 / DSM 19441 / 03DC25 / GPIC) (Chlamydophila caviae).